The primary structure comprises 158 residues: Glycine/sarcosine/betaine reductase complex component A (158 aa).

U44 is a catalytic residue. A non-standard amino acid (selenocysteine) is located at residue U44.

The protein belongs to the GrdA family. Monomer. Component of the glycine, sarcosine and betaine reductase complexes, together with components B and C.

The enzyme catalyses acetyl phosphate + [thioredoxin]-disulfide + NH4(+) + H2O = [thioredoxin]-dithiol + glycine + phosphate + H(+). It carries out the reaction acetyl phosphate + methylamine + [thioredoxin]-disulfide + H2O = sarcosine + [thioredoxin]-dithiol + phosphate + H(+). The catalysed reaction is acetyl phosphate + trimethylamine + [thioredoxin]-disulfide + H2O = glycine betaine + [thioredoxin]-dithiol + phosphate + H(+). In terms of biological role, in the first step of glycine, betaine and sarcosine reductases, the substrate is bound to component PB via a Schiff base intermediate. Then the PB-activated substrate is nucleophilically attacked by the selenol anion of component PA to transform it to a carboxymethylated selenoether and the respective amine. By action of component PC, acetyl phosphate is formed, leaving component PA in its oxidized state. Finally component PA becomes reduced by the thioredoxin system to start a new catalytic cycle of reductive deamination. This chain is Glycine/sarcosine/betaine reductase complex component A, found in Clostridium botulinum (strain ATCC 19397 / Type A).